Here is a 180-residue protein sequence, read N- to C-terminus: Der GTPase-activating protein YihI (180 aa).

2 disordered regions span residues 1-88 (MTRK…KERR) and 147-180 (PEVTEEAPVRKGAKTDEDLLDQFENMDLDSFGKE). Composition is skewed to basic and acidic residues over residues 18-33 (FREKSTTQVDVEARKS), 50-67 (EALDPKHYANGQKKDPRL), 77-88 (VEKKPTTKKERR), and 153-163 (APVRKGAKTDE). Positions 164 to 173 (DLLDQFENMD) are enriched in acidic residues.

The protein belongs to the YihI family. In terms of assembly, interacts with Der.

Functionally, a GTPase-activating protein (GAP) that modifies Der/EngA GTPase function. May play a role in ribosome biogenesis. The protein is Der GTPase-activating protein YihI of Photobacterium profundum (strain SS9).